A 212-amino-acid polypeptide reads, in one-letter code: Abscisic acid receptor PYL10 (212 aa).

An START-like region spans residues 34-191 (YAVGPGQCSS…NLQKLKSVSE (158 aa)). Residues Lys-70, 107-112 (ASTSTE), 134-140 (RLRNYRS), and Glu-156 each bind abscisate. The Gate loop motif lies at 103 to 107 (SGLPA). The Latch loop signature appears at 133–135 (HRL).

This sequence belongs to the PYR/PYL/RCAR abscisic acid intracellular receptor family. As to quaternary structure, homodimer. Interacts with PP2C53. Binding to PP2C53 is dependent on the presence of abscisic acid (ABA). Interacts with PP2C50. Binding to PP2C50 is dependent on the presence of ABA.

It localises to the cytoplasm. The protein resides in the cytosol. Its subcellular location is the nucleus. Its function is as follows. Inhibits the protein phosphatases PP2C06 and PP2C09 when activated by abscisic acid (ABA). Together with PP2C53, SAPK8 and SAPK10, may form an ABA signaling module involved in stress response. The protein is Abscisic acid receptor PYL10 of Oryza sativa subsp. japonica (Rice).